A 282-amino-acid chain; its full sequence is MASLGQIIFWSIINVIIILAGAIVLIIGFGISGKHFITVTTFTSAGNIGEDGTLSCTFEPDIKLNGIVIQWLKEGIKGLVHEFKEGKDDLSQQHEMFRGRTAVFADQVVVGNASLRLKNVQLTDAGTYTCYIHTSKGKGNANLEYKTGAFSMPEINVDYNASSESLRCEAPRWFPQPTVAWASQVDQGANFSEVSNTSFELNSENVTMKVVSVLYNVTINNTYSCMIENDIAKATGDIKVTDSEVKRRSQLELLNSGPSPCVSSVSAAGWALLSLSCCLMLR.

The signal sequence occupies residues 1–24 (MASLGQIIFWSIINVIIILAGAIV). Ig-like V-type domains follow at residues 35–144 (HFIT…ANLE) and 153–241 (PEIN…IKVT). Intrachain disulfides connect Cys56/Cys130 and Cys168/Cys225. N-linked (GlcNAc...) asparagine glycosylation occurs at Asn216. Gly257 is lipidated: GPI-anchor amidated glycine. Residues 258–282 (PSPCVSSVSAAGWALLSLSCCLMLR) constitute a propeptide, removed in mature form.

This sequence belongs to the immunoglobulin superfamily. BTN/MOG family. N-glycosylated.

Its subcellular location is the cell membrane. Its function is as follows. Negatively regulates T-cell-mediated immune response by inhibiting T-cell activation, proliferation, cytokine production and development of cytotoxicity. When expressed on the cell surface of tumor macrophages, plays an important role, together with regulatory T-cells (Treg), in the suppression of tumor-associated antigen-specific T-cell immunity. Involved in promoting epithelial cell transformation. In Rattus norvegicus (Rat), this protein is V-set domain-containing T-cell activation inhibitor 1.